Reading from the N-terminus, the 128-residue chain is Small ribosomal subunit protein uS11 (128 aa).

This sequence belongs to the universal ribosomal protein uS11 family. As to quaternary structure, part of the 30S ribosomal subunit. Interacts with proteins S7 and S18. Binds to IF-3.

Functionally, located on the platform of the 30S subunit, it bridges several disparate RNA helices of the 16S rRNA. Forms part of the Shine-Dalgarno cleft in the 70S ribosome. The sequence is that of Small ribosomal subunit protein uS11 from Phytoplasma australiense.